The primary structure comprises 116 residues: Tyrosine-protein phosphatase 10 (116 aa).

The Tyrosine-protein phosphatase domain maps to 1–116 (WRMVWEQNVS…SPTGYGPIVV (116 aa)). A substrate-binding site is contributed by Asp-86.

This sequence belongs to the protein-tyrosine phosphatase family.

The enzyme catalyses O-phospho-L-tyrosyl-[protein] + H2O = L-tyrosyl-[protein] + phosphate. The chain is Tyrosine-protein phosphatase 10 (STY-10) from Styela plicata (Wrinkled sea squirt).